The chain runs to 697 residues: Elongation factor G 2 (697 aa).

Residues 5–280 form the tr-type G domain; that stretch reads SKYRNIGIFA…AVVDYLPAPN (276 aa). GTP-binding positions include 14-21, 78-82, and 132-135; these read AHVDAGKT, DTPGH, and NKLD.

The protein belongs to the TRAFAC class translation factor GTPase superfamily. Classic translation factor GTPase family. EF-G/EF-2 subfamily.

It localises to the cytoplasm. Catalyzes the GTP-dependent ribosomal translocation step during translation elongation. During this step, the ribosome changes from the pre-translocational (PRE) to the post-translocational (POST) state as the newly formed A-site-bound peptidyl-tRNA and P-site-bound deacylated tRNA move to the P and E sites, respectively. Catalyzes the coordinated movement of the two tRNA molecules, the mRNA and conformational changes in the ribosome. The polypeptide is Elongation factor G 2 (Shewanella sp. (strain MR-4)).